We begin with the raw amino-acid sequence, 348 residues long: Phosphatidylglycerophosphate phosphatase 1, chloroplastic/mitochondrial (348 aa).

A chloroplast and mitochondrion-targeting transit peptide spans 1 to 58 (MQTPSMAASTTSYYPIPKSFLLSPPRHKRNPNLISCSTKPICSPPPPSSSSSSPLQTT). The disordered stretch occupies residues 17-67 (PKSFLLSPPRHKRNPNLISCSTKPICSPPPPSSSSSSPLQTTTTHRSQKQN). Residues 55–67 (LQTTTTHRSQKQN) are compositionally biased toward polar residues. The short motif at 184-188 (DKDNT) is the Phosphoryl acceptor element.

It belongs to the HAD-like hydrolase superfamily. Mg(2+) is required as a cofactor. In terms of tissue distribution, mainly expressed in inflorescences (especially in pollen) and, to a lower extent, in leaves, stems and siliques, as well as, at low levels, in roots. Mostly expressed in hypocotyl, vasculatures, trichomes, guard cells and stigmas.

The protein resides in the plastid. The protein localises to the chloroplast. It localises to the mitochondrion. The enzyme catalyses a 1,2-diacyl-sn-glycero-3-phospho-(1'-sn-glycero-3'-phosphate) + H2O = a 1,2-diacyl-sn-glycero-3-phospho-(1'-sn-glycerol) + phosphate. It participates in phospholipid metabolism; phosphatidylglycerol biosynthesis; phosphatidylglycerol from CDP-diacylglycerol: step 2/2. Its function is as follows. Phosphatidylglycerophosphate (PGP) phosphatase involved in the biosynthesis of phosphatidylglycerol (PG), a phosphoglycerolipid predominantly present in chloroplastic thylakoid membranes and which has important photosynthetic function; seems to use PGP 34:3, PGP 34:2 and PGP 34:1 as substrates. Required for thylakoid membranes development and chloroplast function. Necessary for normal cell growth. Required for root growth and columella cells organization. This chain is Phosphatidylglycerophosphate phosphatase 1, chloroplastic/mitochondrial, found in Arabidopsis thaliana (Mouse-ear cress).